The following is a 372-amino-acid chain: Mannan endo-1,4-beta-mannosidase 8 (372 aa).

The substrate site is built by Trp-57 and Asn-172. Catalysis depends on Glu-173, which acts as the Proton donor. Tyr-253 serves as a coordination point for substrate. The active-site Nucleophile is Glu-293. Trp-335 contacts substrate.

The protein belongs to the glycosyl hydrolase 5 (cellulase A) family. Expressed in stems and leaves and seeds.

It catalyses the reaction Random hydrolysis of (1-&gt;4)-beta-D-mannosidic linkages in mannans, galactomannans and glucomannans.. The protein is Mannan endo-1,4-beta-mannosidase 8 (MAN8) of Oryza sativa subsp. japonica (Rice).